A 542-amino-acid polypeptide reads, in one-letter code: MGNSKPLPTISCISVFALYFSFYTITLTSSTSLQDDFIKCLYRNTNVRFTLDKTFFTPERNASIFTEVLESTAQNQRYLTKTMPKPGFIFKPVHESHVQASVICSKKLEIHFRVRSGGHDYEGVSYVSQIEKPFVLIDLSKLRQINVDIKDTSAWVEAGATVGELYYRIAEKSKFHGFPAGVYPSLGIGGHITGGAYGSLMRKYGLAADNVLDAKIVDANGKLLDRASMGEDLFWAIRGGSGGSFGIILSWKIKLVPVPETLTVFTVTKTFEQDRSFKILSKWQEIADNLVDELFLRVFFTVSGNKANKTVTMAYIGQFLGEKGTLMEVMKKDFPELGLTQKDCIEMSWIDSIIYNSGFPTNPPPPIEILLQAKSPIGKVYFKGKSDFAKKPIPVLGLEGMFKKLLEEDAALVIWTPYGGKMDKIPESEIPFPHRNGTNFMIQYYRSWSDSEKRPNRRTKWIRELYGYMTPYVSSNPRQAYVNYRDLDLGQNKDNSKSNFIEAKIWGANYFKDNFNRLVRIKSKVDPDNFFRHEQSIPTLPV.

Positions 1–30 (MGNSKPLPTISCISVFALYFSFYTITLTSS) are cleaved as a signal peptide. The cysteines at positions 40 and 104 are disulfide-linked. N61 carries N-linked (GlcNAc...) asparagine glycosylation. In terms of domain architecture, FAD-binding PCMH-type spans 82–258 (TMPKPGFIFK…LSWKIKLVPV (177 aa)). Pros-8alpha-FAD histidine is present on H119. Residues N308 and N436 are each glycosylated (N-linked (GlcNAc...) asparagine).

It belongs to the oxygen-dependent FAD-linked oxidoreductase family. The cofactor is FAD.

It is found in the secreted. The protein resides in the cell wall. The polypeptide is Berberine bridge enzyme-like 25 (Arabidopsis thaliana (Mouse-ear cress)).